The sequence spans 245 residues: tRNA (guanine-N(1)-)-methyltransferase (245 aa).

Residues G113 and 133–138 (IGDYVL) contribute to the S-adenosyl-L-methionine site.

It belongs to the RNA methyltransferase TrmD family. Homodimer.

The protein resides in the cytoplasm. The enzyme catalyses guanosine(37) in tRNA + S-adenosyl-L-methionine = N(1)-methylguanosine(37) in tRNA + S-adenosyl-L-homocysteine + H(+). Functionally, specifically methylates guanosine-37 in various tRNAs. In Oceanobacillus iheyensis (strain DSM 14371 / CIP 107618 / JCM 11309 / KCTC 3954 / HTE831), this protein is tRNA (guanine-N(1)-)-methyltransferase.